We begin with the raw amino-acid sequence, 195 residues long: Imidazoleglycerol-phosphate dehydratase (195 aa).

This sequence belongs to the imidazoleglycerol-phosphate dehydratase family.

It localises to the cytoplasm. The enzyme catalyses D-erythro-1-(imidazol-4-yl)glycerol 3-phosphate = 3-(imidazol-4-yl)-2-oxopropyl phosphate + H2O. The protein operates within amino-acid biosynthesis; L-histidine biosynthesis; L-histidine from 5-phospho-alpha-D-ribose 1-diphosphate: step 6/9. The chain is Imidazoleglycerol-phosphate dehydratase from Geobacter metallireducens (strain ATCC 53774 / DSM 7210 / GS-15).